A 232-amino-acid chain; its full sequence is 2-C-methyl-D-erythritol 4-phosphate cytidylyltransferase (232 aa).

Belongs to the IspD/TarI cytidylyltransferase family. IspD subfamily.

The enzyme catalyses 2-C-methyl-D-erythritol 4-phosphate + CTP + H(+) = 4-CDP-2-C-methyl-D-erythritol + diphosphate. It participates in isoprenoid biosynthesis; isopentenyl diphosphate biosynthesis via DXP pathway; isopentenyl diphosphate from 1-deoxy-D-xylulose 5-phosphate: step 2/6. In terms of biological role, catalyzes the formation of 4-diphosphocytidyl-2-C-methyl-D-erythritol from CTP and 2-C-methyl-D-erythritol 4-phosphate (MEP). The protein is 2-C-methyl-D-erythritol 4-phosphate cytidylyltransferase of Stenotrophomonas maltophilia (strain K279a).